Here is a 266-residue protein sequence, read N- to C-terminus: Norfluorocurarine synthase 2 (266 aa).

One can recognise an AB hydrolase-1 domain in the interval 11–121 (HFVLVHGAGH…VMPDSTHPPN (111 aa)). Residues Ser86, Asp216, and His244 contribute to the active site.

The protein belongs to the AB hydrolase superfamily. Homodimer.

It catalyses the reaction 17-dehydropreakuammicine + H2O = norfluorocurarine + methanol + CO2. The protein operates within alkaloid biosynthesis. Its function is as follows. Hydrolase involved in the biosynthesis of curare monoterpene indole alkaloids (MIAs), natural products such as diaboline, a pharmacologically active compound used to regulate blood pressure. Curare alkaloids act as animal glycine receptor antagonists. Catalyzes the conversion of dehydropreakuammicine to norfluorocurarine. The polypeptide is Norfluorocurarine synthase 2 (Strychnos sp).